The chain runs to 232 residues: Flagellar L-ring protein (232 aa).

Residues 1–15 (MKKVLFYVLPFAFFG) form the signal peptide. The N-palmitoyl cysteine moiety is linked to residue C16. Residue C16 is the site of S-diacylglycerol cysteine attachment.

Belongs to the FlgH family. The basal body constitutes a major portion of the flagellar organelle and consists of four rings (L,P,S, and M) mounted on a central rod.

The protein resides in the cell outer membrane. It is found in the bacterial flagellum basal body. In terms of biological role, assembles around the rod to form the L-ring and probably protects the motor/basal body from shearing forces during rotation. The polypeptide is Flagellar L-ring protein (Campylobacter jejuni subsp. doylei (strain ATCC BAA-1458 / RM4099 / 269.97)).